Consider the following 532-residue polypeptide: Probable calcium-binding mitochondrial carrier CBG00135 (532 aa).

EF-hand domains lie at 70–105 (EKEK…QTPH), 107–136 (PATM…NYVI), 137–172 (AHEA…MGVN), and 173–208 (LDDH…YPST). Positions 83, 85, 87, 89, and 94 each coordinate Ca(2+). D150, N152, D154, E156, and E161 together coordinate Ca(2+). Solcar repeat units lie at residues 243-329 (GVWW…IKRW), 339-425 (LTTY…LKSC), and 436-526 (PGVL…VRKQ). A run of 6 helical transmembrane segments spans residues 249-266 (LVAG…TAPF), 304-323 (GNGI…FMSY), 349-362 (SSAG…IYPM), 400-419 (GYLP…LTVY), 442-459 (LACG…SYPL), and 501-518 (GITP…ISYV).

It belongs to the mitochondrial carrier (TC 2.A.29) family.

It is found in the mitochondrion inner membrane. Its function is as follows. Calcium-dependent mitochondrial solute carrier. This chain is Probable calcium-binding mitochondrial carrier CBG00135, found in Caenorhabditis briggsae.